The primary structure comprises 275 residues: D-apionate oxidoisomerase (275 aa).

Residues glycine 11 to methionine 13, glutamate 32, and aspartate 68 contribute to the NAD(+) site. The Zn(2+) site is built by histidine 113 and glutamate 183.

Belongs to the ApnO family. Zn(2+) serves as cofactor.

It carries out the reaction D-apionate + NAD(+) = 3-oxoisoapionate + NADH + H(+). It participates in carbohydrate metabolism. Involved in catabolism of D-apiose. Catalyzes the conversion of D-apionate to 3-oxo-isoapionate. This chain is D-apionate oxidoisomerase, found in Rhizobium rhizogenes (strain K84 / ATCC BAA-868) (Agrobacterium radiobacter).